Consider the following 1194-residue polypeptide: Rho-associated protein kinase let-502 (1194 aa).

The 263-residue stretch at 68–330 (FRQLKVIGRG…VDEIRNHKFF (263 aa)) folds into the Protein kinase domain. Residues 74–82 (IGRGAFGEV) and Lys97 each bind ATP. The Proton acceptor role is filled by Asp190. Residues 331 to 402 (KNDEWTFETL…SNEYSPVKKL (72 aa)) enclose the AGC-kinase C-terminal domain. Coiled-coil stretches lie at residues 436-844 (EEQY…MAKR) and 875-933 (GRIL…EYPQ). In terms of domain architecture, RhoBD spans 784-846 (EQNLKHIENQ…LEEEMAKRQP (63 aa)). Positions 961–1171 (IQIDGWLSLR…SQLRRFIEAS (211 aa)) constitute a PH domain. The Phorbol-ester/DAG-type zinc finger occupies 1085–1138 (RHDFQELSYHTRTYCDDCGKKLSDFIRPTPAFECKNCHYKTHKEHIAQGTITMC).

Belongs to the protein kinase superfamily. AGC Ser/Thr protein kinase family. As to quaternary structure, interacts with rho-1. Mg(2+) serves as cofactor.

It localises to the cytoplasm. It is found in the cytoskeleton. The protein resides in the cleavage furrow. It carries out the reaction L-seryl-[protein] + ATP = O-phospho-L-seryl-[protein] + ADP + H(+). It catalyses the reaction L-threonyl-[protein] + ATP = O-phospho-L-threonyl-[protein] + ADP + H(+). Its activity is regulated as follows. Activated by rho-1 binding. Functionally, negatively regulates mel-11 to relieve the inhibition of mlc-4, allowing contraction of the circumferentially oriented microfilaments in epidermal cells and thereby regulating myosin II contractility during spermathecal contraction, cleavage furrow contraction in early embryos, and embryonic elongation and morphogenesis. Required for P-cell migration. May also play a role in oocyte cellularization. The sequence is that of Rho-associated protein kinase let-502 from Caenorhabditis briggsae.